We begin with the raw amino-acid sequence, 1059 residues long: WD repeat-containing protein on Y chromosome (1059 aa).

11 WD repeats span residues 121–161 (DFCP…ALTA), 170–209 (RSKTWVLDTVPLPDLSMFCVTGLETELRLYNVVAACFTLK), 214–256 (RLPQ…KVTT), 344–383 (CVPRGVTCFAFEPSNELLVSGGPDCDLRLWDIHRPEKPSV), 387–426 (GHTSSITFLFLQDAGEKIYSLDQRKIIKVWDVRNRVLLQT), 476–515 (SHTKPVSVLLYNGLYRLVVSCGFDSFIIVWDHRVNRKMTI), 528–567 (LEPVEITAACFDGKEQMLLTGARNGSLKIWNIGGRTCMRT), 616–658 (QHSD…RRYD), 714–759 (MRQL…GFKG), 766–805 (MAGDRIITLATDKANRFLFTGTALGYVKTWYIENCWIPNE), and 849–888 (AHRACVTGLTYLDDTGLLLSCSSDRTVRLWTLGGRYIGLL).

The chain is WD repeat-containing protein on Y chromosome from Anopheles gambiae (African malaria mosquito).